The chain runs to 275 residues: DNA-directed RNA polymerase subunit Rpo3 (275 aa).

This sequence belongs to the archaeal Rpo3/eukaryotic RPB3 RNA polymerase subunit family. Part of the RNA polymerase complex.

The protein localises to the cytoplasm. It catalyses the reaction RNA(n) + a ribonucleoside 5'-triphosphate = RNA(n+1) + diphosphate. In terms of biological role, DNA-dependent RNA polymerase (RNAP) catalyzes the transcription of DNA into RNA using the four ribonucleoside triphosphates as substrates. The protein is DNA-directed RNA polymerase subunit Rpo3 of Methanopyrus kandleri (strain AV19 / DSM 6324 / JCM 9639 / NBRC 100938).